The following is a 165-amino-acid chain: RxLR effector protein CRE12 (165 aa).

The first 23 residues, 1-23 (MRLAAFVLVAVAFAIIPDGRVSA), serve as a signal peptide directing secretion. A RxLR-dEER motif is present at residues 40–59 (RLLRLNAVPQPVETGNQEER).

This sequence belongs to the RxLR effector family.

The protein resides in the secreted. It localises to the host cell. Functionally, effector that is involved in host plant infection. Contributes to virulence during the early infection stage, by inhibiting plant defense responses induced by both PAMP-triggered immunity (PTI) and effector-triggered immunity (ETI). This Phytophthora infestans (strain T30-4) (Potato late blight agent) protein is RxLR effector protein CRE12.